We begin with the raw amino-acid sequence, 236 residues long: 2-C-methyl-D-erythritol 4-phosphate cytidylyltransferase (236 aa).

Belongs to the IspD/TarI cytidylyltransferase family. IspD subfamily. In terms of assembly, homodimer.

The enzyme catalyses 2-C-methyl-D-erythritol 4-phosphate + CTP + H(+) = 4-CDP-2-C-methyl-D-erythritol + diphosphate. Its pathway is isoprenoid biosynthesis; isopentenyl diphosphate biosynthesis via DXP pathway; isopentenyl diphosphate from 1-deoxy-D-xylulose 5-phosphate: step 2/6. Its function is as follows. Catalyzes the formation of 4-diphosphocytidyl-2-C-methyl-D-erythritol from CTP and 2-C-methyl-D-erythritol 4-phosphate (MEP). The polypeptide is 2-C-methyl-D-erythritol 4-phosphate cytidylyltransferase (Klebsiella pneumoniae subsp. pneumoniae (strain ATCC 700721 / MGH 78578)).